The sequence spans 30 residues: Cycloviolacin-O9 (30 aa).

A cross-link (cyclopeptide (Gly-Asn)) is located at residues 1-30; the sequence is GIPCGESCVWIPCLTSAVGCSCKSKVCYRN. 3 cysteine pairs are disulfide-bonded: Cys-4-Cys-20, Cys-8-Cys-22, and Cys-13-Cys-27.

Post-translationally, this is a cyclic peptide.

In terms of biological role, probably participates in a plant defense mechanism. This is Cycloviolacin-O9 from Viola odorata (Sweet violet).